The chain runs to 102 residues: Sulfur globule protein CV3 (102 aa).

The signal sequence occupies residues 1 to 25 (MTMKRLLLVSTLAGASALATLPANA).

As to quaternary structure, the protein envelope of the sulfur globules is composed of the three different proteins CV1, CV2 and CV3.

Functionally, structural protein of the sulfur globules, which are intracellular globules that serve for sulfur storage in purple sulfur bacteria. This chain is Sulfur globule protein CV3 (sgpC), found in Allochromatium vinosum (strain ATCC 17899 / DSM 180 / NBRC 103801 / NCIMB 10441 / D) (Chromatium vinosum).